The following is a 545-amino-acid chain: MKTKFIFITGGVLSSLGKGLAAASIGALLKARGMTATIQKLDPYINVDPGTMNPFQHGEVYVTDDGAETDLDLGHYERYLDVSLSQKNNMTSGRVYHNVITKERRGDYLGGTVQVIPHITDEIKNAVMNVPNGEDVALIEIGGTVGDIEGLPFLEAIRQLRSELGSENVLYIHLTLVPYLAAAGEVKTKPTQHSVKELRSIGIHPDIILCRSEVDLDEDIKRKIALFCDVDRDAVFTAVDVKSIYQLPLSFYNEGLDQKIAIMLKLPAKNCNLESWRKLNHTLENPTGETTIGIVGKYVDLKEAYKSLHEALIHGGVANEVKVNLRYVNSEEITPENVKEKLAGCDGVLVPGGFGNRGVEGKITAIQYARENKVPFFGICLGMQCAVIEYARNVMGLKGANSEEFNPEGDDNVIYLMKEWYDYRTKKTENRCEESDKGGTMRLGAYPCKVVEGTKAMAAYGKTEIQERHRHRYEFNKEKFADQLVEAGLVLSGLSPDEALVEIVEVADHPWFLGCQFHPEFKSNPMHAHPLFRDFIKASCENKNK.

Positions 1-266 are amidoligase domain; that stretch reads MKTKFIFITG…DQKIAIMLKL (266 aa). CTP is bound at residue serine 14. Serine 14 serves as a coordination point for UTP. ATP-binding positions include 15–20 and aspartate 72; that span reads SLGKGL. Mg(2+) is bound by residues aspartate 72 and glutamate 140. Residues 147-149, 187-192, and lysine 223 contribute to the CTP site; these read DIE and KTKPTQ. UTP-binding positions include 187–192 and lysine 223; that span reads KTKPTQ. A Glutamine amidotransferase type-1 domain is found at 291–545; it reads TIGIVGKYVD…IKASCENKNK (255 aa). Glycine 353 contacts L-glutamine. Cysteine 380 acts as the Nucleophile; for glutamine hydrolysis in catalysis. Residues 381 to 384, glutamate 404, and arginine 472 each bind L-glutamine; that span reads LGMQ. Residues histidine 518 and glutamate 520 contribute to the active site.

This sequence belongs to the CTP synthase family. As to quaternary structure, homotetramer.

It catalyses the reaction UTP + L-glutamine + ATP + H2O = CTP + L-glutamate + ADP + phosphate + 2 H(+). The enzyme catalyses L-glutamine + H2O = L-glutamate + NH4(+). The catalysed reaction is UTP + NH4(+) + ATP = CTP + ADP + phosphate + 2 H(+). The protein operates within pyrimidine metabolism; CTP biosynthesis via de novo pathway; CTP from UDP: step 2/2. With respect to regulation, allosterically activated by GTP, when glutamine is the substrate; GTP has no effect on the reaction when ammonia is the substrate. The allosteric effector GTP functions by stabilizing the protein conformation that binds the tetrahedral intermediate(s) formed during glutamine hydrolysis. Inhibited by the product CTP, via allosteric rather than competitive inhibition. Catalyzes the ATP-dependent amination of UTP to CTP with either L-glutamine or ammonia as the source of nitrogen. Regulates intracellular CTP levels through interactions with the four ribonucleotide triphosphates. This Maridesulfovibrio salexigens (strain ATCC 14822 / DSM 2638 / NCIMB 8403 / VKM B-1763) (Desulfovibrio salexigens) protein is CTP synthase.